The following is a 491-amino-acid chain: Probable glycine dehydrogenase (decarboxylating) subunit 2 (491 aa).

Residue lysine 264 is modified to N6-(pyridoxal phosphate)lysine.

The protein belongs to the GcvP family. C-terminal subunit subfamily. As to quaternary structure, the glycine cleavage system is composed of four proteins: P, T, L and H. In this organism, the P 'protein' is a heterodimer of two subunits. Pyridoxal 5'-phosphate is required as a cofactor.

It carries out the reaction N(6)-[(R)-lipoyl]-L-lysyl-[glycine-cleavage complex H protein] + glycine + H(+) = N(6)-[(R)-S(8)-aminomethyldihydrolipoyl]-L-lysyl-[glycine-cleavage complex H protein] + CO2. Functionally, the glycine cleavage system catalyzes the degradation of glycine. The P protein binds the alpha-amino group of glycine through its pyridoxal phosphate cofactor; CO(2) is released and the remaining methylamine moiety is then transferred to the lipoamide cofactor of the H protein. The chain is Probable glycine dehydrogenase (decarboxylating) subunit 2 from Coxiella burnetii (strain CbuG_Q212) (Coxiella burnetii (strain Q212)).